The primary structure comprises 424 residues: Serine--tRNA ligase (424 aa).

232–234 lines the L-serine pocket; that stretch reads TAE. An ATP-binding site is contributed by 263 to 265; it reads RKE. L-serine is bound at residue Glu286. Residue 350–353 participates in ATP binding; that stretch reads EISS. Ser386 lines the L-serine pocket.

The protein belongs to the class-II aminoacyl-tRNA synthetase family. Type-1 seryl-tRNA synthetase subfamily. As to quaternary structure, homodimer. The tRNA molecule binds across the dimer.

Its subcellular location is the cytoplasm. It carries out the reaction tRNA(Ser) + L-serine + ATP = L-seryl-tRNA(Ser) + AMP + diphosphate + H(+). The enzyme catalyses tRNA(Sec) + L-serine + ATP = L-seryl-tRNA(Sec) + AMP + diphosphate + H(+). It functions in the pathway aminoacyl-tRNA biosynthesis; selenocysteinyl-tRNA(Sec) biosynthesis; L-seryl-tRNA(Sec) from L-serine and tRNA(Sec): step 1/1. Catalyzes the attachment of serine to tRNA(Ser). Is also able to aminoacylate tRNA(Sec) with serine, to form the misacylated tRNA L-seryl-tRNA(Sec), which will be further converted into selenocysteinyl-tRNA(Sec). The chain is Serine--tRNA ligase from Thermodesulfovibrio yellowstonii (strain ATCC 51303 / DSM 11347 / YP87).